The sequence spans 293 residues: HTH-type transcriptional regulator ArgP (293 aa).

In terms of domain architecture, HTH lysR-type spans 4–60 (PDYRTLQALDAVIRERGFERAAQKLCITQSAVSQRIKQLENLFGQPLLVRTIPPHPT). A DNA-binding region (H-T-H motif) is located at residues 21 to 40 (FERAAQKLCITQSAVSQRIK).

This sequence belongs to the LysR transcriptional regulatory family. As to quaternary structure, homodimer.

Its function is as follows. Controls the transcription of genes involved in arginine and lysine metabolism. The chain is HTH-type transcriptional regulator ArgP from Sodalis glossinidius (strain morsitans).